Here is a 353-residue protein sequence, read N- to C-terminus: UPF0283 membrane protein YcjF (353 aa).

Basic and acidic residues predominate over residues 1–19; it reads MSEPLKPRIDFAEPLKEEP. Positions 1-35 are disordered; that stretch reads MSEPLKPRIDFAEPLKEEPTSAFKAQQTFSEAESR. 3 helical membrane-spanning segments follow: residues 70–90, 100–120, and 213–233; these read MVMG…VQWT, VALG…GSVV, and ESTL…FIAW.

Belongs to the UPF0283 family.

Its subcellular location is the cell inner membrane. The polypeptide is UPF0283 membrane protein YcjF (Salmonella enteritidis PT4 (strain P125109)).